Reading from the N-terminus, the 468-residue chain is PE family protein PE3 (468 aa).

Residues 1-92 (MSYVIAAPEM…AGAAYAQAEA (92 aa)) enclose the PE domain. Residues 154–375 (PVAQYTPEQW…DLRVLVDLGY (222 aa)) enclose the PE-PPE domain.

The protein belongs to the mycobacterial PE family.

The protein resides in the secreted. It is found in the cell wall. In terms of biological role, plays significant roles in mycobacterial persistence during infection and modulates host immune response. This is PE family protein PE3 from Mycobacterium tuberculosis (strain ATCC 25618 / H37Rv).